The following is a 384-amino-acid chain: 8-amino-7-oxononanoate synthase (384 aa).

Arg21 serves as a coordination point for substrate. Gly108–Phe109 provides a ligand contact to pyridoxal 5'-phosphate. His133 lines the substrate pocket. Ser179, His207, and Thr233 together coordinate pyridoxal 5'-phosphate. N6-(pyridoxal phosphate)lysine is present on Lys236. Residue Thr352 participates in substrate binding.

It belongs to the class-II pyridoxal-phosphate-dependent aminotransferase family. BioF subfamily. Homodimer. Requires pyridoxal 5'-phosphate as cofactor.

The catalysed reaction is 6-carboxyhexanoyl-[ACP] + L-alanine + H(+) = (8S)-8-amino-7-oxononanoate + holo-[ACP] + CO2. Its pathway is cofactor biosynthesis; biotin biosynthesis. In terms of biological role, catalyzes the decarboxylative condensation of pimeloyl-[acyl-carrier protein] and L-alanine to produce 8-amino-7-oxononanoate (AON), [acyl-carrier protein], and carbon dioxide. The chain is 8-amino-7-oxononanoate synthase from Shigella boydii serotype 18 (strain CDC 3083-94 / BS512).